A 389-amino-acid polypeptide reads, in one-letter code: Nicotinamide-nucleotide adenylyltransferase (389 aa).

The Nuclear localization signal signature appears at 380–383 (KKQK).

Belongs to the eukaryotic NMN adenylyltransferase family. Abundantly expressed in neuronal and muscle cells. Present at relatively low levels at the neuromuscular junction. Expressed in the eye; present in photoreceptor cells and various neurons in the lamina cortex and medulla cortex and at low levels in the lamina.

It is found in the nucleus. The protein resides in the cytoplasm. Its subcellular location is the presynaptic active zone. It catalyses the reaction beta-nicotinamide D-ribonucleotide + ATP + H(+) = diphosphate + NAD(+). The enzyme catalyses nicotinate beta-D-ribonucleotide + ATP + H(+) = deamido-NAD(+) + diphosphate. The protein operates within cofactor biosynthesis; NAD(+) biosynthesis; NAD(+) from nicotinamide D-ribonucleotide: step 1/1. Its pathway is cofactor biosynthesis; NAD(+) biosynthesis; deamido-NAD(+) from nicotinate D-ribonucleotide: step 1/1. In terms of biological role, catalyzes the formation of NAD(+) from nicotinamide mononucleotide (NMN) and ATP. Essential for viability. Stress-response chaperone protein that prevents toxic aggregation of proteins and promotes proteasome-mediated degradation of misfolded proteins; this is independent of its NAD(+) synthesis activity. Neuroprotective in response to toxic protein aggregation, for example by overexpressed Atx-1/ataxin-1. Required for maintenance and integrity of mature neurons, protecting them from neuronal activity-induced neurodegeneration. Required for the maintenance of axonal and dendritic integrity in both central and peripheral neurons. Chaperone function and neuroprotective roles are largely independent of NAD(+) synthesis activity. Catalyzes the formation of NAD(+) from nicotinamide mononucleotide (NMN) and ATP. Has, or stimulates, chaperone holdase activity but not refoldase activity. Does not have neuroprotective properties and may stimulate apoptosis and neurodegeneration in response to toxic protein aggregates. Its function is as follows. Catalyzes the formation of NAD(+) from nicotinamide mononucleotide (NMN) and ATP. Has, or stimulates, chaperone holdase and refoldase activity. Neuroprotective and reduces the toxic load of protein aggregates, preventing apoptosis and neurodegeneration. Promotes clearance of nuclear misfolded protein aggregates. The protein is Nicotinamide-nucleotide adenylyltransferase of Drosophila melanogaster (Fruit fly).